The following is a 251-amino-acid chain: Flap endonuclease Xni (251 aa).

Asp-104 contributes to the Mg(2+) binding site. Residues 160-249 (VLPRQLPDYW…IDGNLQQLRL (90 aa)) form the 5'-3' exonuclease domain. Residues Leu-171, Ala-172, Pro-180, Val-182, and Ile-185 each coordinate K(+). The interval 184-189 (GIGPKS) is interaction with DNA.

Belongs to the Xni family. Mg(2+) is required as a cofactor. It depends on K(+) as a cofactor.

Its function is as follows. Has flap endonuclease activity. During DNA replication, flap endonucleases cleave the 5'-overhanging flap structure that is generated by displacement synthesis when DNA polymerase encounters the 5'-end of a downstream Okazaki fragment. The protein is Flap endonuclease Xni of Salmonella typhimurium (strain LT2 / SGSC1412 / ATCC 700720).